A 370-amino-acid chain; its full sequence is F-box/kelch-repeat protein At4g38940 (370 aa).

The 47-residue stretch at Pro-18 to Arg-64 folds into the F-box domain. Kelch repeat units follow at residues Asn-131–Arg-177, Lys-178–Gly-230, and Ser-263–Gly-315.

As to quaternary structure, part of a SCF (ASK-cullin-F-box) protein ligase complex. Interacts with SKP1A/ASK1, SKP1B/ASK2, ASK11, ASK13 and ASK18.

The protein resides in the nucleus. The protein operates within protein modification; protein ubiquitination. In terms of biological role, component of SCF(ASK-cullin-F-box) E3 ubiquitin ligase complexes, which may mediate the ubiquitination and subsequent proteasomal degradation of target proteins. This is F-box/kelch-repeat protein At4g38940 from Arabidopsis thaliana (Mouse-ear cress).